The following is a 632-amino-acid chain: Polyadenylate-binding protein, cytoplasmic and nuclear (632 aa).

Positions 1 to 11 are enriched in polar residues; the sequence is MSAADANQLQE. Residues 1-43 form a disordered region; that stretch reads MSAADANQLQESLEKLNLDSAPAAAEEEAVAAESAPAGEEGAD. A compositionally biased stretch (low complexity) spans 31–43; the sequence is AAESAPAGEEGAD. 4 consecutive RRM domains span residues 52–130, 140–217, 233–310, and 336–413; these read ASLY…WSQR, GNIF…KHIS, TNIY…RAQK, and VNLF…LAQR. Residues 534 to 615 enclose the PABC domain; sequence QQRDLAAIIA…ALTAFEEYKN (82 aa).

Belongs to the polyadenylate-binding protein type-1 family.

The protein localises to the cytoplasm. Its subcellular location is the nucleus. Functionally, binds the poly(A) tail of mRNA. Appears to be an important mediator of the multiple roles of the poly(A) tail in mRNA biogenesis, stability and translation. In the nucleus, involved in both mRNA cleavage and polyadenylation. Is also required for efficient mRNA export to the cytoplasm. Acts in concert with a poly(A)-specific nuclease (PAN) to affect poly(A) tail shortening, which may occur concomitantly with either nucleocytoplasmic mRNA transport or translational initiation. In the cytoplasm, stimulates translation initiation and regulates mRNA decay through translation termination-coupled poly(A) shortening, probably mediated by PAN. This chain is Polyadenylate-binding protein, cytoplasmic and nuclear (PAB1), found in Scheffersomyces stipitis (strain ATCC 58785 / CBS 6054 / NBRC 10063 / NRRL Y-11545) (Yeast).